Reading from the N-terminus, the 350-residue chain is Glycerol-1-phosphate dehydrogenase [NAD(P)+] (350 aa).

NAD(+) is bound by residues 94-98 (GKPID) and 116-119 (TVAS). Aspartate 121 serves as a coordination point for substrate. Serine 125 is a binding site for NAD(+). Aspartate 168 provides a ligand contact to substrate. Positions 168 and 248 each coordinate Zn(2+). Histidine 252 contributes to the substrate binding site. Histidine 264 provides a ligand contact to Zn(2+).

It belongs to the glycerol-1-phosphate dehydrogenase family. Zn(2+) is required as a cofactor.

Its subcellular location is the cytoplasm. It catalyses the reaction sn-glycerol 1-phosphate + NAD(+) = dihydroxyacetone phosphate + NADH + H(+). The enzyme catalyses sn-glycerol 1-phosphate + NADP(+) = dihydroxyacetone phosphate + NADPH + H(+). It participates in membrane lipid metabolism; glycerophospholipid metabolism. Catalyzes the NAD(P)H-dependent reduction of dihydroxyacetonephosphate (DHAP or glycerone phosphate) to glycerol 1-phosphate (G1P). The G1P thus generated is used as the glycerophosphate backbone of phospholipids in the cellular membranes of Archaea. This chain is Glycerol-1-phosphate dehydrogenase [NAD(P)+], found in Halorubrum lacusprofundi (strain ATCC 49239 / DSM 5036 / JCM 8891 / ACAM 34).